The primary structure comprises 311 residues: GTP cyclohydrolase MptA (311 aa).

Belongs to the GTP cyclohydrolase IV family. Homodimer. Fe(2+) is required as a cofactor.

It catalyses the reaction GTP + H2O = 7,8-dihydroneopterin 2',3'-cyclic phosphate + formate + diphosphate + H(+). It participates in cofactor biosynthesis; 5,6,7,8-tetrahydromethanopterin biosynthesis. Its function is as follows. Converts GTP to 7,8-dihydro-D-neopterin 2',3'-cyclic phosphate, the first intermediate in the biosynthesis of coenzyme methanopterin. This Halobacterium salinarum (strain ATCC 29341 / DSM 671 / R1) protein is GTP cyclohydrolase MptA.